A 338-amino-acid chain; its full sequence is Phenylalanine--tRNA ligase alpha subunit (338 aa).

Position 253 (Glu-253) interacts with Mg(2+).

It belongs to the class-II aminoacyl-tRNA synthetase family. Phe-tRNA synthetase alpha subunit type 1 subfamily. As to quaternary structure, tetramer of two alpha and two beta subunits. Requires Mg(2+) as cofactor.

Its subcellular location is the cytoplasm. It carries out the reaction tRNA(Phe) + L-phenylalanine + ATP = L-phenylalanyl-tRNA(Phe) + AMP + diphosphate + H(+). The protein is Phenylalanine--tRNA ligase alpha subunit of Gloeobacter violaceus (strain ATCC 29082 / PCC 7421).